Here is a 249-residue protein sequence, read N- to C-terminus: Type III pantothenate kinase (249 aa).

6 to 13 (DIGNSRTK) lines the ATP pocket. Residues Y89 and 96–99 (GIDR) contribute to the substrate site. Residue D98 is the Proton acceptor of the active site. D119 contributes to the K(+) binding site. Residue T122 participates in ATP binding. Substrate is bound at residue T174.

Belongs to the type III pantothenate kinase family. Homodimer. Requires NH4(+) as cofactor. K(+) is required as a cofactor.

The protein localises to the cytoplasm. The enzyme catalyses (R)-pantothenate + ATP = (R)-4'-phosphopantothenate + ADP + H(+). The protein operates within cofactor biosynthesis; coenzyme A biosynthesis; CoA from (R)-pantothenate: step 1/5. In terms of biological role, catalyzes the phosphorylation of pantothenate (Pan), the first step in CoA biosynthesis. The chain is Type III pantothenate kinase from Colwellia psychrerythraea (strain 34H / ATCC BAA-681) (Vibrio psychroerythus).